A 428-amino-acid chain; its full sequence is C4-dicarboxylate transport protein 1 (428 aa).

8 helical membrane-spanning segments follow: residues 5–27 (FYKI…GHFE), 42–64 (IQLI…IAGM), 77–99 (ALLY…GHIF), 150–167 (ILQI…LSAM), 188–210 (IVHV…TIGK), 225–247 (TFYL…LTGF), 314–336 (IFIS…LAVA), and 351–373 (FITL…VLIL).

It belongs to the dicarboxylate/amino acid:cation symporter (DAACS) (TC 2.A.23) family.

The protein resides in the cell inner membrane. Responsible for the transport of dicarboxylates such as succinate, fumarate, and malate from the periplasm across the membrane. In Ralstonia nicotianae (strain ATCC BAA-1114 / GMI1000) (Ralstonia solanacearum), this protein is C4-dicarboxylate transport protein 1 (dctA1).